The following is a 238-amino-acid chain: Ribonuclease PH (238 aa).

Phosphate contacts are provided by residues arginine 86 and 124 to 126 (GTR).

It belongs to the RNase PH family. Homohexameric ring arranged as a trimer of dimers.

The enzyme catalyses tRNA(n+1) + phosphate = tRNA(n) + a ribonucleoside 5'-diphosphate. Its function is as follows. Phosphorolytic 3'-5' exoribonuclease that plays an important role in tRNA 3'-end maturation. Removes nucleotide residues following the 3'-CCA terminus of tRNAs; can also add nucleotides to the ends of RNA molecules by using nucleoside diphosphates as substrates, but this may not be physiologically important. Probably plays a role in initiation of 16S rRNA degradation (leading to ribosome degradation) during starvation. The chain is Ribonuclease PH from Actinobacillus pleuropneumoniae serotype 7 (strain AP76).